A 389-amino-acid polypeptide reads, in one-letter code: Basigin (389 aa).

The signal sequence occupies residues 1 to 21 (MAAALLLALAFTLLSGQGACA). Residues 22 to 325 (AAGFLKAPLS…ETISLRVRSR (304 aa)) are Extracellular-facing. An Ig-like domain is found at 37 to 120 (GGSVVLHCEA…SSDPDRNHLT (84 aa)). 3 disulfide bridges follow: Cys-44–Cys-108, Cys-157–Cys-203, and Cys-242–Cys-305. The 82-residue stretch at 138–219 (EPGTIQTSVQ…VGRSEINVEG (82 aa)) folds into the Ig-like C2-type domain. Asn-160, Asn-270, and Asn-306 each carry an N-linked (GlcNAc...) asparagine glycan. One can recognise an Ig-like V-type domain in the interval 221 to 319 (PRIKVGKKSE…AQGTTRETIS (99 aa)). A helical membrane pass occupies residues 326–349 (MAALWPFLGIVAEVLVLVTIIFIY). The Cytoplasmic segment spans residues 350-389 (EKRRKPDQTLDEDDPGAAPLKGSGTHMNDKDKNVRQRNAT). The tract at residues 356–389 (DQTLDEDDPGAAPLKGSGTHMNDKDKNVRQRNAT) is disordered. Thr-358 carries the phosphothreonine modification. Phosphoserine is present on Ser-372.

In terms of assembly, interacts with NXNL1. Interacts with SLC2A1 and SLC16A1/GLUT1. Interacts with XKR8; promoting its localization at the cell membrane. Interacts with ATP1B2, MAG and L1CAM. Interacts with SLC16A7. Interacts with VEGFA, KDR/VEGFR2, PPIA/CYPA, SLC1A3, SLC16A11 and SLC16A12. Interacts with PPIL2; regulates BSG transport to the cell membrane. Interacts with SLC16A1; interaction mediates SLC16A1 targeting to the plasma membrane. Interacts with SLC16A3; interaction mediates SLC16A3 targeting to the plasma membrane. As to quaternary structure, interacts with SLC16A6; this interaction mediates targeting to the plasma membrane. In terms of processing, N-glycosylated. Post-translationally, N-glycosylated. During spermatogenesis, probably deglycosylated during epididymal transit. As to expression, retina-specific. Expressed in both rods and cones (at protein level). In terms of tissue distribution, testis and caput, corpus and cauda epididymides (at protein level). Expressed in the brain, lung, liver, kidney, heart, spleen, uterus, retina and skeletal muscle.

The protein localises to the cell membrane. The protein resides in the photoreceptor inner segment. It localises to the cell projection. Its subcellular location is the cilium. It is found in the photoreceptor outer segment. The protein localises to the endoplasmic reticulum membrane. The protein resides in the basolateral cell membrane. In terms of biological role, essential for normal retinal maturation and development. Acts as a retinal cell surface receptor for NXNL1 and plays an important role in NXNL1-mediated survival of retinal cone photoreceptors. In association with glucose transporter SLC16A1/GLUT1 and NXNL1, promotes retinal cone survival by enhancing aerobic glycolysis and accelerating the entry of glucose into photoreceptors. Signaling receptor for cyclophilins, essential for PPIA/CYPA and PPIB/CYPB-dependent signaling related to chemotaxis and adhesion of immune cells. Plays an important role in targeting the monocarboxylate transporters SLC16A1, SLC16A3 and SLC16A8 to the plasma membrane. Acts as a coreceptor for vascular endothelial growth factor receptor 2 (KDR/VEGFR2) in endothelial cells enhancing its VEGFA-mediated activation and downstream signaling. Promotes angiogenesis through EPAS1/HIF2A-mediated up-regulation of VEGFA and KDR/VEGFR2 in endothelial cells. Plays an important role in spermatogenesis; mediates interactions between germ cells and Sertoli cell and is essential for the development/differentiation of germ cells to round spermatids. The protein is Basigin (Bsg) of Mus musculus (Mouse).